The chain runs to 306 residues: Pantothenate kinase (306 aa).

91 to 98 (GSVAVGKS) is a binding site for ATP.

Belongs to the prokaryotic pantothenate kinase family.

Its subcellular location is the cytoplasm. The enzyme catalyses (R)-pantothenate + ATP = (R)-4'-phosphopantothenate + ADP + H(+). It participates in cofactor biosynthesis; coenzyme A biosynthesis; CoA from (R)-pantothenate: step 1/5. This is Pantothenate kinase (coaA) from Streptococcus pyogenes serotype M3 (strain ATCC BAA-595 / MGAS315).